The following is a 143-amino-acid chain: Large ribosomal subunit protein uL16 (143 aa).

The protein belongs to the universal ribosomal protein uL16 family. In terms of assembly, part of the 50S ribosomal subunit.

Binds 23S rRNA and is also seen to make contacts with the A and possibly P site tRNAs. In Oenococcus oeni (strain ATCC BAA-331 / PSU-1), this protein is Large ribosomal subunit protein uL16.